Here is a 247-residue protein sequence, read N- to C-terminus: E3 SUMO-protein ligase NSE2 (247 aa).

At Met1 the chain carries N-acetylmethionine. Glycyl lysine isopeptide (Lys-Gly) (interchain with G-Cter in SUMO2) cross-links involve residues Lys90 and Lys107. The residue at position 116 (Ser116) is a Phosphoserine. Glycyl lysine isopeptide (Lys-Gly) (interchain with G-Cter in SUMO2) cross-links involve residues Lys125 and Lys130. The SP-RING-type zinc finger occupies 154 to 240 (VDEDIIVTQS…LRRAIENHNK (87 aa)). Zn(2+)-binding residues include Cys185, His187, Cys210, and Cys215.

The protein belongs to the NSE2 family. Component of the SMC5-SMC6 complex which consists at least of SMC5, SMC6, NSMCE2, NSMCE1, NSMCE4A or EID3 and NSMCE3. Post-translationally, sumoylated, possibly via autosumoylation.

It is found in the nucleus. It localises to the chromosome. The protein localises to the telomere. Its subcellular location is the PML body. Its pathway is protein modification; protein sumoylation. E3 SUMO-protein ligase component of the SMC5-SMC6 complex, a complex involved in DNA double-strand break repair by homologous recombination. Is not be required for the stability of the complex. The complex may promote sister chromatid homologous recombination by recruiting the SMC1-SMC3 cohesin complex to double-strand breaks. The complex is required for telomere maintenance via recombination in ALT (alternative lengthening of telomeres) cell lines and mediates sumoylation of shelterin complex (telosome) components which is proposed to lead to shelterin complex disassembly in ALT-associated PML bodies (APBs). Acts as an E3 ligase mediating SUMO attachment to various proteins such as SMC6L1 and TSNAX, the shelterin complex subunits TERF1, TERF2, TINF2 and TERF2IP, RAD51AP1, and maybe the cohesin components RAD21 and STAG2. Required for recruitment of telomeres to PML nuclear bodies. SUMO protein-ligase activity is required for the prevention of DNA damage-induced apoptosis by facilitating DNA repair, and for formation of APBs in ALT cell lines. Required for sister chromatid cohesion during prometaphase and mitotic progression. This chain is E3 SUMO-protein ligase NSE2 (NSMCE2), found in Homo sapiens (Human).